The sequence spans 537 residues: Probable quinate permease (537 aa).

Over 1 to 22 (MSILSLVEDRPTPKEVYNWKIY) the chain is Cytoplasmic. Residues 23–43 (LLAAVASCTSCMIGYDSAFIG) form a helical membrane-spanning segment. The Extracellular segment spans residues 44 to 74 (TTISLQSFKDEFDWDSMSAAHQDLVSSNIVS). The helical transmembrane segment at 75 to 95 (LYQAGAFFGAFFAYPIGHFWG) threads the bilayer. Over 96-97 (RK) the chain is Cytoplasmic. A helical membrane pass occupies residues 98–118 (WGLMVSALIFTLGAGIMLGTN). The Extracellular segment spans residues 119 to 130 (GDRGFGLLYGGR). A helical membrane pass occupies residues 131-151 (VLAGLGVGAGSNITPIYISEL). Residues 152–159 (SPPAIRGR) lie on the Cytoplasmic side of the membrane. Residues 160-180 (LVGVYELGWQIGGLVGFWICY) form a helical membrane-spanning segment. At 181 to 193 (GVDETLPPSHKQW) the chain is on the extracellular side. Residues 194–214 (IIPFAVQLIPSGLLIIGALFL) form a helical membrane-spanning segment. Residues 215–285 (KESPRWLFLR…AWTNKKILYR (71 aa)) are Cytoplasmic-facing. A helical transmembrane segment spans residues 286-306 (LFLGSMLFFWQNGSGINAINY). Over 307 to 325 (YSPTVFKSIGVTGSNTSLF) the chain is Extracellular. A helical membrane pass occupies residues 326 to 346 (TTGIFGVVKTVVTFIWLLWLI). Topologically, residues 347-352 (DRVGRR) are cytoplasmic. Residues 353–373 (LLLLIGAAGGSICLWIVGAYI) form a helical membrane-spanning segment. Over 374-387 (KIARPSERENKQMD) the chain is Extracellular. The chain crosses the membrane as a helical span at residues 388-408 (GGGIAAMFFFYLWTVFYTPSW). Residues 409 to 456 (NGTPWVINSEMFDPNIRSLAQACAAGSNWLWNFLISRFTPQMFAKMDY) lie on the Cytoplasmic side of the membrane. The chain crosses the membrane as a helical span at residues 457–477 (GVYFFFASLMILSIIFVFFLI). Over 478–537 (PETKGIPLESMDRLFETQPIWRAHGTLLKQIREDEERFRHDLEDSGFVKSTDRQVEVVDA) the chain is Extracellular.

The protein belongs to the major facilitator superfamily. Sugar transporter (TC 2.A.1.1) family. Interacts with creB. Ubiquitinated. Deubiquitinated by creB, probably to control its activity or amount.

It is found in the cell membrane. In terms of biological role, integral membrane transporter that imports quinic acid to be catabolized as a carbon source. The chain is Probable quinate permease (qutD) from Aspergillus flavus (strain ATCC 200026 / FGSC A1120 / IAM 13836 / NRRL 3357 / JCM 12722 / SRRC 167).